Here is a 140-residue protein sequence, read N- to C-terminus: Perlin matrix protein (140 aa).

The N-terminal stretch at 1–26 is a signal peptide; sequence MTCTLRLTVAALVLLGICHLSRPVAA.

This sequence belongs to the N16 matrix protein family. Heterooligomer; disulfide-linked. Pif97, Pif80, N16 and other proteins form a complex. In terms of tissue distribution, component of conchiolin, the organic matrix of nacre. Only expressed in the dorsal region of the mantle.

Its subcellular location is the secreted. The protein resides in the extracellular space. It localises to the extracellular matrix. Its function is as follows. May be specifically involved in the formation of the nacreous layer. This Margaritifera margaritifera (Freshwater pearl mussel) protein is Perlin matrix protein.